We begin with the raw amino-acid sequence, 446 residues long: uncharacterized protein (446 aa).

Disordered stretches follow at residues 198–233, 309–337, and 394–431; these read SIQK…ENYS, NEDN…DDSK, and SESV…FGNT. The span at 199 to 224 shows a compositional bias: low complexity; that stretch reads IQKQIPKQTQEQTQKQTQEQTQESSQ. Over residues 317 to 333 the composition is skewed to acidic residues; it reads DNEEDSDESDIESDSDL. Residues 397-418 show a composition bias toward basic and acidic residues; that stretch reads VKSDSNESKSIKPESIKSESIK.

This is an uncharacterized protein from Acanthamoeba polyphaga mimivirus (APMV).